The sequence spans 157 residues: Globin (157 aa).

Gly-1 is subject to N-acetylglycine. In terms of domain architecture, Globin spans 8 to 155; it reads SLSADQKAAI…MANIIDAEQK (148 aa). The heme b site is built by His-70 and His-102.

Belongs to the globin family. In terms of assembly, monomer.

The protein is Globin of Nerita albicilla (Ox-palate nerite).